An 83-amino-acid polypeptide reads, in one-letter code: Small ribosomal subunit protein eS27 (83 aa).

The segment at 37 to 59 (CPGCFNITTVFSHAQTVVICGSC) adopts a C4-type zinc-finger fold.

It belongs to the eukaryotic ribosomal protein eS27 family. In terms of assembly, component of the small ribosomal subunit (SSU). Mature yeast ribosomes consist of a small (40S) and a large (60S) subunit. The 40S small subunit contains 1 molecule of ribosomal RNA (18S rRNA) and at least 33 different proteins. The large 60S subunit contains 3 rRNA molecules (25S, 5.8S and 5S rRNA) and at least 46 different proteins. The cofactor is Zn(2+).

Its subcellular location is the cytoplasm. Its function is as follows. Component of the ribosome, a large ribonucleoprotein complex responsible for the synthesis of proteins in the cell. The small ribosomal subunit (SSU) binds messenger RNAs (mRNAs) and translates the encoded message by selecting cognate aminoacyl-transfer RNA (tRNA) molecules. The large subunit (LSU) contains the ribosomal catalytic site termed the peptidyl transferase center (PTC), which catalyzes the formation of peptide bonds, thereby polymerizing the amino acids delivered by tRNAs into a polypeptide chain. The nascent polypeptides leave the ribosome through a tunnel in the LSU and interact with protein factors that function in enzymatic processing, targeting, and the membrane insertion of nascent chains at the exit of the ribosomal tunnel. This Schizosaccharomyces pombe (strain 972 / ATCC 24843) (Fission yeast) protein is Small ribosomal subunit protein eS27 (rps27).